The chain runs to 54 residues: Light-harvesting protein B-800/850 alpha chain (54 aa).

Residues 1 to 14 (MTNGKIWLVVKPTV) are Cytoplasmic-facing. The helical transmembrane segment at 15-35 (GVPLFLSAAVIASVVIHAAVL) threads the bilayer. His31 is a binding site for a bacteriochlorophyll. Over 36–54 (TTTTWLPAYYQGSAAVAAE) the chain is Periplasmic.

This sequence belongs to the antenna complex alpha subunit family. In terms of assembly, the core complex is formed by different alpha and beta chains, binding bacteriochlorophyll molecules, and arranged most probably in tetrameric structures disposed around the reaction center. The non-pigmented gamma chains may constitute additional components.

The protein localises to the cell inner membrane. Antenna complexes are light-harvesting systems, which transfer the excitation energy to the reaction centers. This chain is Light-harvesting protein B-800/850 alpha chain (pucA), found in Cereibacter sphaeroides (Rhodobacter sphaeroides).